The sequence spans 780 residues: Vacuolar protein sorting-associated protein 51 homolog (780 aa).

At Ala2 the chain carries N-acetylalanine. 2 disordered regions span residues 270–292 (STLV…PAKI) and 615–651 (QGTF…SNSQ). Positions 273 to 284 (VEDDDSSNDTES) are enriched in acidic residues. Residues 626 to 639 (SNGSNTTTSSRSNT) are compositionally biased toward low complexity.

The protein belongs to the VPS51 family. As to quaternary structure, component of the Golgi-associated retrograde protein (GARP) complex, composed by VPS51, VPS52, VPS53 and VPS54. Component of the endosome-associated retrograde protein (EARP) complex, composed of VPS51, VPS52, VPS53 and VPS50. Interacts with VPS52. Expressed in primary and lateral roots, shoots of seedlings and flowers.

The protein resides in the golgi apparatus. The protein localises to the trans-Golgi network. It localises to the recycling endosome. Its subcellular location is the prevacuolar compartment. Functionally, acts as a component of the GARP complex that is involved in retrograde transport from early and late endosomes to the trans-Golgi network (TGN). The GARP complex is required for the maintenance of protein retrieval from endosomes to the TGN, acid hydrolase sorting, lysosome function, endosomal cholesterol traffic and autophagy. VPS51 participates in retrograde transport of acid hydrolase receptors, likely by promoting tethering and SNARE-dependent fusion of endosome-derived carriers to the TGN. Acts as a component of the EARP complex that is involved in endocytic recycling. The EARP complex associates with Rab4-positive endosomes and promotes recycling of internalized transferrin receptor (TFRC) to the plasma membrane. Required for vacuolar targeting and cellular trafficking. Involved in the regulation of vascular tissue patterning, probably by regulating PIN1 expression pattern, thus modulating auxin flux. Important to prevent PIN1 accumulation within margin cells, possibly by targeting PIN1 to the lytic vacuole. Regulates PIN1 and ATHB8 expression pattern in secondary veins. This Arabidopsis thaliana (Mouse-ear cress) protein is Vacuolar protein sorting-associated protein 51 homolog.